The sequence spans 37 residues: Large ribosomal subunit protein bL36c (37 aa).

Belongs to the bacterial ribosomal protein bL36 family.

The protein localises to the plastid. The protein resides in the chloroplast. The chain is Large ribosomal subunit protein bL36c from Physcomitrium patens (Spreading-leaved earth moss).